Consider the following 148-residue polypeptide: 3-dehydroquinate dehydratase (148 aa).

Tyr24 functions as the Proton acceptor in the catalytic mechanism. Positions 75, 81, and 88 each coordinate substrate. The Proton donor role is filled by His101. Substrate-binding positions include 102–103 (LS) and Arg112.

It belongs to the type-II 3-dehydroquinase family. In terms of assembly, homododecamer.

It catalyses the reaction 3-dehydroquinate = 3-dehydroshikimate + H2O. The protein operates within metabolic intermediate biosynthesis; chorismate biosynthesis; chorismate from D-erythrose 4-phosphate and phosphoenolpyruvate: step 3/7. Catalyzes a trans-dehydration via an enolate intermediate. This Bartonella henselae (strain ATCC 49882 / DSM 28221 / CCUG 30454 / Houston 1) (Rochalimaea henselae) protein is 3-dehydroquinate dehydratase.